A 161-amino-acid polypeptide reads, in one-letter code: Phosphopantetheine adenylyltransferase (161 aa).

Ser9 is a substrate binding site. ATP-binding positions include 9-10 and His17; that span reads SF. 3 residues coordinate substrate: Lys41, Val73, and Lys87. Residues 88–90, Glu98, and 122–128 contribute to the ATP site; these read GLR and YSFVSSS.

It belongs to the bacterial CoaD family. In terms of assembly, homohexamer. Requires Mg(2+) as cofactor.

The protein localises to the cytoplasm. It catalyses the reaction (R)-4'-phosphopantetheine + ATP + H(+) = 3'-dephospho-CoA + diphosphate. It participates in cofactor biosynthesis; coenzyme A biosynthesis; CoA from (R)-pantothenate: step 4/5. Functionally, reversibly transfers an adenylyl group from ATP to 4'-phosphopantetheine, yielding dephospho-CoA (dPCoA) and pyrophosphate. The sequence is that of Phosphopantetheine adenylyltransferase from Mycobacterium bovis (strain ATCC BAA-935 / AF2122/97).